A 106-amino-acid chain; its full sequence is CRISPR-associated endoribonuclease Cas2 (106 aa).

Asp22 provides a ligand contact to Mg(2+).

The protein belongs to the CRISPR-associated endoribonuclease Cas2 protein family. In terms of assembly, homodimer, forms a heterotetramer with a Cas1 homodimer. Mg(2+) serves as cofactor.

Its function is as follows. CRISPR (clustered regularly interspaced short palindromic repeat), is an adaptive immune system that provides protection against mobile genetic elements (viruses, transposable elements and conjugative plasmids). CRISPR clusters contain sequences complementary to antecedent mobile elements and target invading nucleic acids. CRISPR clusters are transcribed and processed into CRISPR RNA (crRNA). Functions as a ssRNA-specific endoribonuclease. Involved in the integration of spacer DNA into the CRISPR cassette. This Fusobacterium nucleatum subsp. nucleatum (strain ATCC 25586 / DSM 15643 / BCRC 10681 / CIP 101130 / JCM 8532 / KCTC 2640 / LMG 13131 / VPI 4355) protein is CRISPR-associated endoribonuclease Cas2.